The sequence spans 49 residues: MAKRKANHVIPGMNAAKAQGMGAGYNEKFSNEPLTEAQRQNNKKRKKNQ.

The segment at 23 to 49 (AGYNEKFSNEPLTEAQRQNNKKRKKNQ) is disordered.

Belongs to the SspO family.

It localises to the spore core. The chain is Small, acid-soluble spore protein O from Geobacillus thermodenitrificans (strain NG80-2).